We begin with the raw amino-acid sequence, 177 residues long: Small ribosomal subunit protein uS5 (177 aa).

Residues 19 to 82 form the S5 DRBM domain; that stretch reads WQERVVQIRR…ADGKKQLVEV (64 aa).

This sequence belongs to the universal ribosomal protein uS5 family. Part of the 30S ribosomal subunit. Contacts proteins S4 and S8.

Functionally, with S4 and S12 plays an important role in translational accuracy. In terms of biological role, located at the back of the 30S subunit body where it stabilizes the conformation of the head with respect to the body. This is Small ribosomal subunit protein uS5 from Acaryochloris marina (strain MBIC 11017).